The sequence spans 335 residues: Aliphatic sulfonates import ATP-binding protein SsuB (335 aa).

Residues 48–71 are disordered; the sequence is PFASGGAFGRAPRDDDDDRRGAGD. One can recognise an ABC transporter domain in the interval 74–293; the sequence is VRLTRVSKRY…ARASAAFAEL (220 aa). Residue 106-113 coordinates ATP; it reads GRSGCGKS.

This sequence belongs to the ABC transporter superfamily. Aliphatic sulfonates importer (TC 3.A.1.17.2) family. As to quaternary structure, the complex is composed of two ATP-binding proteins (SsuB), two transmembrane proteins (SsuC) and a solute-binding protein (SsuA).

Its subcellular location is the cell inner membrane. The catalysed reaction is ATP + H2O + aliphatic sulfonate-[sulfonate-binding protein]Side 1 = ADP + phosphate + aliphatic sulfonateSide 2 + [sulfonate-binding protein]Side 1.. Functionally, part of the ABC transporter complex SsuABC involved in aliphatic sulfonates import. Responsible for energy coupling to the transport system. The protein is Aliphatic sulfonates import ATP-binding protein SsuB of Burkholderia thailandensis (strain ATCC 700388 / DSM 13276 / CCUG 48851 / CIP 106301 / E264).